The chain runs to 491 residues: MSSQYLRIFQQPRSAILLILGFASGLPLALTSGTLQAWMTVENIDLKTIGFFSLVGQAYVFKFLWSPLMDRYTPPFFGRRRGWLLATQILLLVAIAAMGFLEPGTQLRWMAALAVVIAFCSASQDIVFDAWKTDVLPAEERGAGAAISVLGYRLGMLVSGGLALWLADKWLGWQGMYWLMAALLIPCIIATLLAPEPTDTIPVPKTLEQAVVAPLRDFFGRNNAWLILLLIVLYKLGDAFAMSLTTTFLIRGVGFDAGEVGVVNKTLGLLATIVGALYGGILMQRLSLFRALLIFGILQGASNAGYWLLSITDKHLYSMGAAVFFENLCGGMGTSAFVALLMTLCNKSFSATQFALLSALSAVGRVYVGPVAGWFVEAHGWSTFYLFSVAAAVPGLILLLVCRQTLEYTRVNDNFISRTAYPAGYAFAMWTLAAGVSLLAVWLLLLTMDALDLTHFSFLPALLEVGVLVALSGVVLGGLLDYLALRKTHLT.

At 1–11 (MSSQYLRIFQQ) the chain is on the cytoplasmic side. A helical transmembrane segment spans residues 12–32 (PRSAILLILGFASGLPLALTS). Over 33 to 47 (GTLQAWMTVENIDLK) the chain is Periplasmic. The chain crosses the membrane as a helical span at residues 48 to 61 (TIGFFSLVGQAYVF). Residues 62–81 (KFLWSPLMDRYTPPFFGRRR) lie on the Cytoplasmic side of the membrane. A helical membrane pass occupies residues 82 to 105 (GWLLATQILLLVAIAAMGFLEPGT). A topological domain (periplasmic) is located at residue Q106. The helical transmembrane segment at 107–124 (LRWMAALAVVIAFCSASQ) threads the bilayer. Over 125-221 (DIVFDAWKTD…VAPLRDFFGR (97 aa)) the chain is Cytoplasmic. The chain crosses the membrane as a helical span at residues 222 to 240 (NNAWLILLLIVLYKLGDAF). Residues 241–264 (AMSLTTTFLIRGVGFDAGEVGVVN) are Periplasmic-facing. A helical transmembrane segment spans residues 265-284 (KTLGLLATIVGALYGGILMQ). At 285-287 (RLS) the chain is on the cytoplasmic side. Residues 288-303 (LFRALLIFGILQGASN) traverse the membrane as a helical segment. Residues 304-327 (AGYWLLSITDKHLYSMGAAVFFEN) are Periplasmic-facing. A helical transmembrane segment spans residues 328-346 (LCGGMGTSAFVALLMTLCN). Over 347 to 421 (KSFSATQFAL…NDNFISRTAY (75 aa)) the chain is Cytoplasmic. Residues 422 to 453 (PAGYAFAMWTLAAGVSLLAVWLLLLTMDALDL) traverse the membrane as a helical segment. Residues 454-457 (THFS) are Periplasmic-facing. A helical membrane pass occupies residues 458–485 (FLPALLEVGVLVALSGVVLGGLLDYLAL). At 486–491 (RKTHLT) the chain is on the cytoplasmic side.

Belongs to the major facilitator superfamily.

The protein resides in the cell inner membrane. Functionally, permease involved in cell wall peptidoglycan recycling. Transports, from the periplasm into the cytoplasm, the disaccharide N-acetylglucosaminyl-beta-1,4-anhydro-N-acetylmuramic acid (GlcNAc-anhMurNAc) and GlcNAc-anhMurNAc-peptides. Transport is dependent on the proton motive force. This is Anhydromuropeptide permease (ampG) from Escherichia coli O157:H7.